A 345-amino-acid chain; its full sequence is MKALEWMGDSLKILDQTRLPVEIKYRMAATYEEVAEAIEKMEVRGAPAIGAAAAYGYALGAIGYSGELAGLSAHMEKVQHRLAETRPTAVNLFWALRRMEDRLRDQHEAKELAEIRQALVAEAESIAEDDRRVNRLIGEHGNAIVTAEANILTHCNAGALATVEYGTALGVIRAAQQAGKKVHVYAGETRPFLQGARLTALELMNDHIPVTLIADNMAGFLMQQGNIDLVIVGADRIAANGDTANKIGTYSLAVLAHAHGIPFYVAAPTSTIDLKVPSGQDIPIEERNPKELREVFGVQVAPPEVPVYNPAFDVTPAKLITGIITEKGIVTSPYSVNLLKMMVRS.

Substrate contacts are provided by residues 44-46, Arg-86, and Gln-194; that span reads RGA. Asp-235 functions as the Proton donor in the catalytic mechanism. 245-246 is a binding site for substrate; that stretch reads NK.

This sequence belongs to the eIF-2B alpha/beta/delta subunits family. MtnA subfamily.

The catalysed reaction is 5-(methylsulfanyl)-alpha-D-ribose 1-phosphate = 5-(methylsulfanyl)-D-ribulose 1-phosphate. It participates in amino-acid biosynthesis; L-methionine biosynthesis via salvage pathway; L-methionine from S-methyl-5-thio-alpha-D-ribose 1-phosphate: step 1/6. Catalyzes the interconversion of methylthioribose-1-phosphate (MTR-1-P) into methylthioribulose-1-phosphate (MTRu-1-P). This is Methylthioribose-1-phosphate isomerase from Desulfitobacterium hafniense (strain Y51).